The chain runs to 765 residues: Spastin (765 aa).

The tract at residues 1–94 (MVRTKNQSSS…TSGYGPRGGT (94 aa)) is disordered. Residues 1-107 (MVRTKNQSSS…KQNLYVVSFP (107 aa)) are Cytoplasmic-facing. The segment at 1-195 (MVRTKNQSSS…ALLPLEMATN (195 aa)) is required for localization to punctate cytoplasmic foci. A compositionally biased stretch (low complexity) spans 8–19 (SSSSSASSSTKS). Over residues 48–58 (SSKLSSNRQRA) the composition is skewed to polar residues. Positions 59 to 72 (TITTTTTSTTPGSS) are enriched in low complexity. An intramembrane region (helical) is located at residues 108-128 (IIFLFNVLRSLIYQLFCIFRY). Residues 129–765 (LYCASTKVIY…WSQDYGDITI (637 aa)) are Cytoplasmic-facing. The interval 193–765 (ATNRGGSGGY…WSQDYGDITI (573 aa)) is sufficient for interaction with microtubules and microtubule severing. In terms of domain architecture, MIT spans 218–293 (HRRAFEYISK…SMARDRLHFL (76 aa)). Residues 329–462 (QTNSKAAAVE…GSGSGASTPM (134 aa)) form a disordered region. A compositionally biased stretch (low complexity) spans 355–364 (SGTGSSAGTS). 2 stretches are compositionally biased toward polar residues: residues 389–407 (NKSQ…STSV) and 428–444 (QFSS…RTPI). Positions 446–462 (NNAASGSGSGSGASTPM) are required for interaction with microtubules. 530–537 (GPPGNGKT) contributes to the ATP binding site.

The protein belongs to the AAA ATPase family. Spastin subfamily. As to quaternary structure, homohexamer. The homohexamer is stabilized by ATP-binding. The homohexamer may adopt a ring conformation through which microtubules pass prior to being severed. Interacts with microtubules. Interacts with atl; may be involved in microtubule dynamics.

It localises to the membrane. The protein resides in the cytoplasm. The protein localises to the cytoskeleton. It is found in the microtubule organizing center. Its subcellular location is the centrosome. It localises to the chromosome. The protein resides in the lipid droplet. The catalysed reaction is n ATP + n H2O + a microtubule = n ADP + n phosphate + (n+1) alpha/beta tubulin heterodimers.. ATP-dependent microtubule severing protein. Stimulates microtubule minus-end depolymerization and poleward microtubule flux in the mitotic spindle. Regulates microtubule stability in the neuromuscular junction synapse. Involved in lipid metabolism by regulating the size and distribution of lipid droplets. Involved in axon regeneration by regulating microtubule severing. The sequence is that of Spastin from Drosophila mojavensis (Fruit fly).